The following is a 312-amino-acid chain: MPATLKNSSATLKLNTGASIPVLGFGTWRSVDNNGYHSVIAALKAGYRHIDAAAIYLNEEEVGRAIKDSGVPREEIFITTKLWGTEQRDPEAALNKSLKRLGLDYVDLYLMHWPVPLKTDRVTDGNVLCIPTLEDGTVDIDTKEWNFIKTWELMQELPKTGKTKAVGVSNFSINNIKELLESPNNKVVPATNQIEIHPLLPQDELIAFCKEKGIVVEAYSPFGSANAPLLKEQAIIDMAKKHGVEPAQLIISWSIQRGYVVLAKSVNPERIVSNFKIFTLPEDDFKTISNLSKVHGTKRVVDMKWGSFPIFQ.

Tyrosine 56 (proton donor) is an active-site residue. Histidine 112 provides a ligand contact to substrate. Residue serine 220–asparagine 274 participates in NADP(+) binding.

Belongs to the aldo/keto reductase family.

It localises to the cytoplasm. It catalyses the reaction a primary alcohol + NADP(+) = an aldehyde + NADPH + H(+). The catalysed reaction is 2-methylbutan-1-ol + NADP(+) = 2-methylbutanal + NADPH + H(+). The enzyme catalyses hexan-1-ol + NADP(+) = hexanal + NADPH + H(+). Its function is as follows. Aldehyde reductase with broad substrate specificity, catalyzing the NADPH-dependent reduction of aldehydes into the corresponding alcohols. In vitro, displays high specific activity towards 2-methylbutanal (2-methylbutyraldehyde), as well as other aldehydes such as hexanal (a toxic lipid peroxidation product and phytoalexin), but exhibits extremely low activity as a glycerol dehydrogenase. Seems to contribute to 2-methylbutanal reduction in vivo, and may therefore play a role in isoleucine catabolism and fusel alcohol formation. The chain is Aldehyde reductase YPR1 (YPR1) from Saccharomyces cerevisiae (strain ATCC 204508 / S288c) (Baker's yeast).